We begin with the raw amino-acid sequence, 328 residues long: P2Y purinoceptor 6 (328 aa).

The Extracellular portion of the chain corresponds to 1 to 27; the sequence is MEWDNGTGQALGLPPTTCVYRENFKQL. Asparagine 5 is a glycosylation site (N-linked (GlcNAc...) asparagine). A helical transmembrane segment spans residues 28 to 48; the sequence is LLPPVYSAVLAAGLPLNICVI. Residues 49-62 lie on the Cytoplasmic side of the membrane; sequence TQICTSRRALTRTA. Residues 63 to 83 form a helical membrane-spanning segment; that stretch reads VYTLNLALADLLYACSLPLLI. The Extracellular portion of the chain corresponds to 84-101; it reads YNYAQGDHWPFGDFACRL. Cysteine 99 and cysteine 177 are oxidised to a cystine. The helical transmembrane segment at 102-122 threads the bilayer; sequence VRFLFYANLHGSILFLTCISF. The Cytoplasmic portion of the chain corresponds to 123-144; it reads QRYLGICHPLAPWHKRGGRRAA. Residues 145–165 form a helical membrane-spanning segment; the sequence is WLVCVAVWLAVTTQCLPTAIF. Topologically, residues 166–194 are extracellular; it reads AATGIQRNRTVCYDLSPPALATHYMPYGM. Residues 195-215 traverse the membrane as a helical segment; that stretch reads ALTVIGFLLPFAALLACYCLL. Topologically, residues 216-236 are cytoplasmic; the sequence is ACRLCRQDGPAEPVAQERRGK. A helical transmembrane segment spans residues 237–257; it reads AARMAVVVAAAFAISFLPFHI. The Extracellular segment spans residues 258–280; the sequence is TKTAYLAVRSTPGVPCTVLEAFA. A helical transmembrane segment spans residues 281–303; sequence AAYKGTRPFASANSVLDPILFYF. Over 304 to 328 the chain is Cytoplasmic; sequence TQKKFRRRPHELLQKLTAKWQRQGR.

The protein belongs to the G-protein coupled receptor 1 family.

It localises to the cell membrane. Its function is as follows. Receptor for extracellular UDP &gt; UTP &gt; ATP. The activity of this receptor is mediated by G proteins which activate a phosphatidylinositol-calcium second messenger system. The sequence is that of P2Y purinoceptor 6 (P2RY6) from Homo sapiens (Human).